Here is a 117-residue protein sequence, read N- to C-terminus: uncharacterized protein (117 aa).

Residues 4-26 (VLNFHFSYIYTYFITITTNYKYG) traverse the membrane as a helical segment.

It is found in the host membrane. This is an uncharacterized protein from Sulfolobus islandicus rod-shaped virus 1 (SIRV-1).